Here is a 380-residue protein sequence, read N- to C-terminus: Cytochrome b (380 aa).

The next 4 helical transmembrane spans lie at Phe-33–Met-53, Trp-77–Val-98, Trp-113–Leu-133, and Phe-178–Leu-198. Heme b contacts are provided by His-83 and His-97. Residues His-182 and His-196 each coordinate heme b. A ubiquinone is bound at residue His-201. The next 4 membrane-spanning stretches (helical) occupy residues Tyr-226–Ser-246, Leu-288–His-308, Leu-320–Gly-340, and Phe-347–Pro-367.

It belongs to the cytochrome b family. In terms of assembly, the cytochrome bc1 complex contains 3 respiratory subunits (MT-CYB, CYC1 and UQCRFS1), 2 core proteins (UQCRC1 and UQCRC2) and probably 6 low-molecular weight proteins. Heme b serves as cofactor.

It is found in the mitochondrion inner membrane. In terms of biological role, component of the ubiquinol-cytochrome c reductase complex (complex III or cytochrome b-c1 complex) that is part of the mitochondrial respiratory chain. The b-c1 complex mediates electron transfer from ubiquinol to cytochrome c. Contributes to the generation of a proton gradient across the mitochondrial membrane that is then used for ATP synthesis. This is Cytochrome b (mt-cyb) from Acipenser transmontanus (White sturgeon).